The primary structure comprises 146 residues: MYAWTDGACRGNPGPGGWGVVLRYRGHERTLHGGEPHTTNNRMELTAAIQALEALDRPCVVHLTTDSQYVRKGITEWMAGWKRRGWRTAARKPVLNEDLWRRLDALNQRHEVHWHWVRGHSGHAENEQADALANRGIDEMQEAGAT.

Residues 1–138 enclose the RNase H type-1 domain; the sequence is MYAWTDGACR…ADALANRGID (138 aa). The Mg(2+) site is built by Asp6, Glu44, Asp66, and Asp130.

This sequence belongs to the RNase H family. As to quaternary structure, monomer. Mg(2+) is required as a cofactor.

Its subcellular location is the cytoplasm. It catalyses the reaction Endonucleolytic cleavage to 5'-phosphomonoester.. Endonuclease that specifically degrades the RNA of RNA-DNA hybrids. The protein is Ribonuclease H of Alkalilimnicola ehrlichii (strain ATCC BAA-1101 / DSM 17681 / MLHE-1).